Consider the following 151-residue polypeptide: Neuroglobin (151 aa).

One can recognise a Globin domain in the interval 1–149; the sequence is MERPEHELIR…VVQAMSRGWN (149 aa). Heme b contacts are provided by His64 and His96.

The protein belongs to the globin family. In terms of assembly, monomer. Homodimer and homotetramer; disulfide-linked. Mainly monomeric but also detected as part of homodimers and homotetramers. Interacts with 14-3-3 proteins; regulates the phosphorylation of NGB. Could interact (ferrous form) with G-alpha(i) proteins (GTP-bound form). Post-translationally, phosphorylated during hypoxia by ERK1/ERK2. Phosphorylation regulates the heme pocket hexacoordination preventing the association of His-64 with the heme metal center. Thereby, promotes the access of dioxygen and nitrite to the heme and stimulates the nitrite reductase activity. Phosphorylation during hypoxia is stabilized by 14-3-3 proteins.

It localises to the cytoplasm. Its subcellular location is the cytosol. It is found in the mitochondrion matrix. It carries out the reaction Fe(III)-heme b-[protein] + nitric oxide + H2O = Fe(II)-heme b-[protein] + nitrite + 2 H(+). Monomeric globin with a bis-histidyl six-coordinate heme-iron atom through which it can bind dioxygen, carbon monoxide and nitric oxide. Could help transport oxygen and increase its availability to the metabolically active neuronal tissues, though its low quantity in tissues as well as its high affinity for dioxygen, which may limit its oxygen-releasing ability, argue against it. The ferrous/deoxygenated form exhibits a nitrite reductase activity and it could produce nitric oxide which in turn inhibits cellular respiration in response to hypoxia. In its ferrous/deoxygenated state, it may also exhibit GDI (Guanine nucleotide Dissociation Inhibitor) activity toward heterotrimeric G-alpha proteins, thereby regulating signal transduction to facilitate neuroprotective responses in the wake of hypoxia and associated oxidative stress. The polypeptide is Neuroglobin (Sus scrofa (Pig)).